We begin with the raw amino-acid sequence, 894 residues long: Microsomal triglyceride transfer protein large subunit (894 aa).

Positions 1-21 are cleaved as a signal peptide; sequence MILLAVLFLCFFSSYSASVKG. The Vitellogenin domain maps to 28–658; that stretch reads LNNERLYKLT…IFQYIGKAEL (631 aa). The cysteines at positions 174 and 194 are disulfide-linked.

Interacts with PRAP1. In terms of assembly, heterodimer; heterodimerizes with the protein disulfide isomerase (P4HB/PDI). Interacts with APOB. As to quaternary structure, heterodimer; heterodimerizes with the protein disulfide isomerase (P4HB/PDI). Post-translationally, cleaved by signal peptidase between residues Gln-33 and Asn-34. Mainly expressed in the intestine and the liver, and at lower levels in white and brown fat cells. Expressed in heart. As to expression, ubiquitous, and is the major isoform in hematopoietic cells and adipocytes.

It localises to the endoplasmic reticulum. It is found in the golgi apparatus. The enzyme catalyses a 1,2-diacyl-sn-glycero-3-phosphocholine(in) = a 1,2-diacyl-sn-glycero-3-phosphocholine(out). It catalyses the reaction a 1,2-diacyl-sn-glycero-3-phosphoethanolamine(in) = a 1,2-diacyl-sn-glycero-3-phosphoethanolamine(out). It carries out the reaction a cholesterol ester(in) = a cholesterol ester(out). The catalysed reaction is a triacyl-sn-glycerol(in) = a triacyl-sn-glycerol(out). Catalyzes the transport of triglyceride, cholesteryl ester, and phospholipid between phospholipid surfaces. Required for the assembly and secretion of plasma lipoproteins that contain apolipoprotein B. May be involved in regulating cholesteryl ester biosynthesis in cells that produce lipoproteins. Its function is as follows. Critical for the development of natural killer T (NKT) cells. Required for the assembly and secretion of plasma lipoproteins that contain apolipoprotein B. The protein is Microsomal triglyceride transfer protein large subunit (Mttp) of Mus musculus (Mouse).